An 81-amino-acid polypeptide reads, in one-letter code: Putative membrane protein insertion efficiency factor (81 aa).

It belongs to the UPF0161 family.

The protein localises to the cell inner membrane. In terms of biological role, could be involved in insertion of integral membrane proteins into the membrane. This chain is Putative membrane protein insertion efficiency factor, found in Pseudomonas savastanoi pv. phaseolicola (strain 1448A / Race 6) (Pseudomonas syringae pv. phaseolicola (strain 1448A / Race 6)).